The primary structure comprises 332 residues: MAERKKRSSIQTNKPNKKPMKKKPFQLNHLPGLSEDLKTMRKLRFVVNDPYATDYSSSEEEERSQRRKRYVCEIDLPFAQAATQAESESSYCQESNNNGVSKTKISACSKKVLRSKASPVVGRSSTTVSKPVGVRQRKWGKWAAEIRHPITKVRTWLGTYETLEQAADAYATKKLEFDALAAATSAASSVLSNESGSMISASGSSIDLDKKLVDSTLDQQAGESKKASFDFDFADLQIPEMGCFIDDSFIPNACELDFLLTEENNNQMLDDYCGIDDLDIIGLECDGPSELPDYDFSDVEIDLGLIGTTIDKYAFVDHIATTTPTPLNIACP.

The interval 1–33 (MAERKKRSSIQTNKPNKKPMKKKPFQLNHLPGL) is disordered. The segment covering 15–24 (PNKKPMKKKP) has biased composition (basic residues). The AP2/ERF DNA-binding region spans 130–187 (KPVGVRQRKWGKWAAEIRHPITKVRTWLGTYETLEQAADAYATKKLEFDALAAATSAA).

Belongs to the AP2/ERF transcription factor family. ERF subfamily.

Its subcellular location is the nucleus. Probably acts as a transcriptional activator. Binds to the GCC-box pathogenesis-related promoter element. May be involved in the regulation of gene expression by stress factors and by components of stress signal transduction pathways. In Arabidopsis thaliana (Mouse-ear cress), this protein is Ethylene-responsive transcription factor ERF119 (ERF119).